The following is a 324-amino-acid chain: DNA-directed RNA polymerase subunit alpha (324 aa).

The tract at residues 1 to 230 (MQSSGLLKPR…EQLSVFADLE (230 aa)) is alpha N-terminal domain (alpha-NTD). The segment at 244-324 (VDPVLLRPVD…NWPPAGLEKA (81 aa)) is alpha C-terminal domain (alpha-CTD).

This sequence belongs to the RNA polymerase alpha chain family. As to quaternary structure, homodimer. The RNAP catalytic core consists of 2 alpha, 1 beta, 1 beta' and 1 omega subunit. When a sigma factor is associated with the core the holoenzyme is formed, which can initiate transcription.

It catalyses the reaction RNA(n) + a ribonucleoside 5'-triphosphate = RNA(n+1) + diphosphate. Its function is as follows. DNA-dependent RNA polymerase catalyzes the transcription of DNA into RNA using the four ribonucleoside triphosphates as substrates. The sequence is that of DNA-directed RNA polymerase subunit alpha from Dechloromonas aromatica (strain RCB).